The primary structure comprises 421 residues: FAD-dependent monooxygenase atnJ (421 aa).

Residues 9-29 (LVPLHVVIVGAGIGGLSAAVA) traverse the membrane as a helical segment. E41 and A54 together coordinate FAD. R188 is an active-site residue. Residues D303 and V316 each contribute to the FAD site. The segment at 371–392 (RDGDAQAARDSQRKATSGTGQN) is disordered.

The protein belongs to the paxM FAD-dependent monooxygenase family. It depends on FAD as a cofactor.

It is found in the membrane. It participates in secondary metabolite biosynthesis; terpenoid biosynthesis. Its function is as follows. FAD-dependent monooxygenase; part of the gene cluster that mediates the biosynthesis of the meroterpenoids arthripenoids. The pathway begins with the HR-PKS atnH that catalyzes two chain-extension steps to form a reduced triketide, which then primes the SAT domain in the NR-PKS atnG to initiate three more cycles of extension to give a linear hexaketide corresponding to the polyketide part of arthripenoids. The FAD-dependent monooxygenase atnJ then performs an oxidative decarboxylation at C11 of the atnH/atnG product, via an electrophilic aromatic hydroxylation with concomitant ipso-decarboxylation. The membrane-bound polyprenyl transferase atnF then introduces a farnesyl group before the FAD-dependent monooxygenase atnK functions as the first epoxidase on terminal C12'-C13' olefin, followed by a second epoxidation on C7'-C8' catalyzed by atnA. The terpene cyclase/mutase atnI then initiates the sequential tricyclic ring formation through protonation of the terminal epoxide and catalyzes the regioselective and stereoselective 6/6/6-tricyclic ring formation. The cytochrome P450 monooxygenase atnM is responsible for hydroxylating both C1' and C10'. The next steps may involve ketoreduction and acetyl transfer by the ketoreductase atnB and the acetyltransferase atnC, and lead to the production of arthripenoid B, the final biosynthetic product of the atn cluster. The hydroquinone moiety in arthripenoid B is prone to undergo spontaneous oxidation to afford a benzoquinone compound, a key intermediate for generating structure diversity. For instance, addition of a cysteine followed by ring contraction gives arthripenoid A, tautomerization gives the main product arthripenoid C, addition of a molecular of water or amine affords arthripenoid D or E, respectively, and loss of one water forms arthripenoid F. The polypeptide is FAD-dependent monooxygenase atnJ (Arthrinium sp).